Consider the following 1405-residue polypeptide: Centlein (1405 aa).

Positions 1–14 are enriched in pro residues; sequence MAARSPPSPHPSPP. A disordered region spans residues 1–79; the sequence is MAARSPPSPH…GGAAPAHAPL (79 aa). Alanine 2 is subject to N-acetylalanine. Residues serine 5 and serine 22 each carry the phosphoserine modification. Residues 48–58 show a composition bias toward basic and acidic residues; the sequence is VVADESDKIWV. Over residues 61 to 71 the composition is skewed to gly residues; the sequence is EGSGGRRGPGG. Residues 95–126 adopt a coiled-coil conformation; it reads EEAMVTRTQLLEEELSSLKEELALCQADKEFV. Disordered stretches follow at residues 421–450 and 493–529; these read KLKEKLQESQGAPLPLPQESDPDYSAQVPH and SRKSIMTSAEGKHKEPPVKRSRSLSPKSSFTDSEELQ. Coiled coils occupy residues 613–655 and 681–793; these read NELA…ELNR and KNGK…ELIN. Positions 865-917 are disordered; sequence WEDVSESSSDSEAQTSQTLGTIIVETSQKISPTEDGKDQKESDPTEDSQTQGK. Polar residues predominate over residues 877–895; the sequence is AQTSQTLGTIIVETSQKIS. Over residues 896–907 the composition is skewed to basic and acidic residues; it reads PTEDGKDQKESD. The stretch at 980 to 1311 forms a coiled coil; that stretch reads NIILLRERII…IRELKKMKKN (332 aa). Position 1343 is a phosphothreonine (threonine 1343).

In terms of assembly, interacts with CEP250 and CEP68. Interacts with NEK2; the interaction leads to phosphorylation of CNTLN. Post-translationally, phosphorylated directly or indirectly by NEK2.

Its subcellular location is the cytoplasm. The protein resides in the cytoskeleton. It localises to the microtubule organizing center. It is found in the centrosome. The protein localises to the centriole. Required for centrosome cohesion and recruitment of CEP68 to centrosomes. In Homo sapiens (Human), this protein is Centlein (CNTLN).